The chain runs to 433 residues: MKLQHVVYLVAIFFVVAIFVIACIEENKYLVWIMIILANTTNILSLVRSISYIKNIRKHQKDTKIQRQLFFEKNGGGMLIERLSGAGSSNIDFKIFTEEDMKEATNGYDVSRILGQGGQWTVYKGILPDNSIVAIKKTRLGDNNQVEQFINEVLVLSQINHRNVVKLLGCCLETEVPLLVYEFITGGSLFDHLHGSMFVSSLTWEHRLEIAIEVAGAIAYLHSGASIPIIHRDIKTENILLDENLTAKVADFGASKLKPMDKEQLTTMVQGTLGYLDPEYYTTWLLNEKSDVYSFGVVLMELISGQKALCFERPETSKHLVSYFVLATKENRLHEIIDDQVLNEENQREIHEAARVAVECTRLKGEERPRMIEVAAELETLRAKTTKHNWLDQYPEENVHLLGSNIVSAQGHTSSRGYDNNKNVARFDIEAGR.

Residues 1 to 22 (MKLQHVVYLVAIFFVVAIFVIA) form the signal peptide. Residues 23 to 29 (CIEENKY) lie on the Extracellular side of the membrane. Residues 30–50 (LVWIMIILANTTNILSLVRSI) form a helical membrane-spanning segment. Residues 51-433 (SYIKNIRKHQ…VARFDIEAGR (383 aa)) are Cytoplasmic-facing. Thr97 is subject to Phosphothreonine. The Protein kinase domain maps to 108–391 (YDVSRILGQG…RAKTTKHNWL (284 aa)). ATP contacts are provided by residues 114–122 (LGQGGQWTV) and Lys136. A Phosphotyrosine modification is found at Tyr181. Asp233 (proton acceptor) is an active-site residue. Phosphothreonine is present on residues Thr267 and Thr272. Tyr280 bears the Phosphotyrosine mark.

Belongs to the protein kinase superfamily. Ser/Thr protein kinase family.

It localises to the membrane. The catalysed reaction is L-seryl-[protein] + ATP = O-phospho-L-seryl-[protein] + ADP + H(+). It catalyses the reaction L-threonyl-[protein] + ATP = O-phospho-L-threonyl-[protein] + ADP + H(+). In terms of biological role, putative serine/threonine-protein kinase that may function as a signaling receptor of extracellular matrix component. The protein is Putative wall-associated receptor kinase-like 16 (WAKL16) of Arabidopsis thaliana (Mouse-ear cress).